A 530-amino-acid chain; its full sequence is PC4 and SFRS1-interacting protein (530 aa).

A PWWP domain is found at 1–64; sequence MTRDFKPGDL…PKDIFPYSEN (64 aa). K75 participates in a covalent cross-link: Glycyl lysine isopeptide (Lys-Gly) (interchain with G-Cter in SUMO2). The segment at 88–349 is disordered; sequence PKVKFSSQQA…VEKKRETSMD (262 aa). A compositionally biased stretch (polar residues) spans 92-104; it reads FSSQQAATKQSNA. Residues S102, S105, and S106 each carry the phosphoserine modification. Residues 113–135 show a composition bias toward basic and acidic residues; sequence KETSVSKEDTDHEEKASNEDVTK. 2 positions are modified to phosphothreonine: T115 and T122. The residue at position 129 (S129) is a Phosphoserine. T141 carries the phosphothreonine modification. A compositionally biased stretch (basic residues) spans 144–153; the sequence is AARRGRKRKA. A Nuclear localization signal motif is present at residues 146 to 156; it reads RRGRKRKAEKQ. Residue T167 is modified to Phosphothreonine. Phosphoserine is present on residues S177 and S206. The segment covering 213–261 has biased composition (basic and acidic residues); it reads EEDKSKKKGQEEKQPKKQPKKDEEGQKEEDKPRKEPDKKEGKKEVESKR. At S271 the chain carries Phosphoserine. A Phosphothreonine modification is found at T272. A phosphoserine mark is found at S273 and S275. The segment covering 274 to 283 has biased composition (acidic residues); that stretch reads DSEEEGDDQE. Residues 287-302 are compositionally biased toward basic residues; it reads KRKGGRNFQTAHRRNM. The segment covering 305-349 has biased composition (basic and acidic residues); sequence GQHEKEAADRKRKQEEQMETEQQNKDEGKKPEVKKVEKKRETSMD. 2 coiled-coil regions span residues 306-334 and 371-395; these read QHEKEAADRKRKQEEQMETEQQNKDEGKK and NRCIEALDELASLQVTMQQAQKHTE. Positions 340–417 are integrase-binding domain (IBD); the sequence is VEKKRETSMD…VSQVIMEKST (78 aa). S434 bears the Phosphoserine mark. Position 437 is a phosphothreonine (T437). At S443 the chain carries Phosphoserine. Positions 446-473 are enriched in basic and acidic residues; it reads EQRQHEEANKTKDQGKKGPNKKLEKEQT. Residues 446–530 are disordered; that stretch reads EQRQHEEANK…ISLKDSTLDN (85 aa). Positions 474–494 are enriched in polar residues; it reads GSKTLNGGSDAQDGNQPQHNG. Residues 498–530 show a composition bias toward basic and acidic residues; the sequence is EDSKDNHEASTKKKPSSEERETEISLKDSTLDN. S514 carries the post-translational modification Phosphoserine. A Citrulline modification is found at R517. S522 bears the Phosphoserine mark. T527 is subject to Phosphothreonine.

This sequence belongs to the HDGF family. In terms of assembly, monomer. Interacts with IFRD1/PC4. Isoform 2 interacts with SFRS1. Isoform 1 interacts (via IBD domain) with POGZ (via IBM motif) and CDCA7L (via IBM motifs). Interacts (via IBD domain) with KMT2A (via IBM motifs) with a moderate affinity whereas interacts with the KMT2A-MEN1 complex with a greater affinity; MEN1 enhances interaction of KMT2A with PSIP1. Interacts with fusion protein KMT2A-MLLT3. Interacts (via IBD domain) with IWS1 (via IBM motif), MED1 (via IBM motif) and DBF4 (via IBM motifs). As to quaternary structure, (Microbial infection) Interacts (via IBD domain) with human HIV-1 integrase protein (HIV-1 IN), determining its nuclear localization, its tight association with chromatin and its protection from the proteasome. (Microbial infection) Interacts with HIV-2 IN. In terms of processing, citrullinated by PADI4. Widely expressed. Expressed at high level in the thymus. Expressed in fetal and adult brain. Expressed in neurons, but not astrocytes. Markedly elevated in fetal as compared to adult brain. In the adult brain, expressed in the subventricular zone (SVZ), in hippocampus, and undetectable elsewhere. In the fetal brain, expressed in the germinal neuroepithelium and cortical plate regions.

Its subcellular location is the nucleus. Its function is as follows. Transcriptional coactivator involved in neuroepithelial stem cell differentiation and neurogenesis. Involved in particular in lens epithelial cell gene regulation and stress responses. May play an important role in lens epithelial to fiber cell terminal differentiation. May play a protective role during stress-induced apoptosis. Isoform 2 is a more general and stronger transcriptional coactivator. Isoform 2 may also act as an adapter to coordinate pre-mRNA splicing. Cellular cofactor for lentiviral integration. This chain is PC4 and SFRS1-interacting protein (PSIP1), found in Homo sapiens (Human).